We begin with the raw amino-acid sequence, 375 residues long: Nicotinate-nucleotide--dimethylbenzimidazole phosphoribosyltransferase (375 aa).

Residue E323 is the Proton acceptor of the active site. Positions L344–E375 are disordered. Over residues L351–E375 the composition is skewed to acidic residues.

This sequence belongs to the CobT family.

It carries out the reaction 5,6-dimethylbenzimidazole + nicotinate beta-D-ribonucleotide = alpha-ribazole 5'-phosphate + nicotinate + H(+). Its pathway is nucleoside biosynthesis; alpha-ribazole biosynthesis; alpha-ribazole from 5,6-dimethylbenzimidazole: step 1/2. Catalyzes the synthesis of alpha-ribazole-5'-phosphate from nicotinate mononucleotide (NAMN) and 5,6-dimethylbenzimidazole (DMB). The polypeptide is Nicotinate-nucleotide--dimethylbenzimidazole phosphoribosyltransferase (Streptomyces avermitilis (strain ATCC 31267 / DSM 46492 / JCM 5070 / NBRC 14893 / NCIMB 12804 / NRRL 8165 / MA-4680)).